Here is a 379-residue protein sequence, read N- to C-terminus: Guanine nucleotide-binding protein subunit alpha-12 (379 aa).

A lipid anchor (S-palmitoyl cysteine) is attached at Cys-11. A G-alpha domain is found at 54 to 379; it reads RLVKILLLGA…QENLKDIMLQ (326 aa). The tract at residues 57–70 is G1 motif; the sequence is KILLLGAGESGKST. GTP contacts are provided by residues 65 to 70 and 200 to 203; these read ESGKST and LLAR. Residue Ser-69 participates in Mg(2+) binding. The interval 198-206 is G2 motif; it reads DILLARKAT. Thr-206 is a binding site for Mg(2+). The residue at position 206 (Thr-206) is a Phosphothreonine. Residues 221 to 230 are G3 motif; the sequence is FKMVDVGGQR. The interval 290 to 297 is G4 motif; that stretch reads ILFLNKMD. GTP is bound by residues 294 to 297 and Ala-351; that span reads NKMD. Residues 349–354 are G5 motif; that stretch reads TTAIDT.

This sequence belongs to the G-alpha family. G(12) subfamily. G proteins are composed of 3 units; alpha, beta and gamma. The alpha chain contains the guanine nucleotide binding site. Interacts with UBXD5. Interacts (in GTP-bound form) with PPP5C (via TPR repeats); activates PPP5C phosphatase activity and translocates PPP5C to the cell membrane. Interacts with RGS22. Interacts (via N-terminus) with NAPA; the interaction promotes CDH5 localization to plasma membrane. Interacts with CTNND1 (via N-terminus); the interaction regulates CDH1-mediated cell-cell adhesion. Interacts with PPP2R1A; the interaction promotes protein phosphatase 2A activation causing dephosphorylation of MAPT. Interacts (in GTP-bound form) with ARHGEF1. Interacts (in GTP-bound form) with ARHGEF11 (via RGS domain). Interacts (in GTP-bound form) with ARHGEF12 (via RGS domain).

It localises to the cell membrane. The protein localises to the lateral cell membrane. The protein resides in the cytoplasm. Guanine nucleotide-binding proteins (G proteins) are involved as modulators or transducers in various transmembrane signaling systems. Activates effector molecule RhoA by binding and activating RhoGEFs (ARHGEF12/LARG). GNA12-dependent Rho signaling subsequently regulates transcription factor AP-1 (activating protein-1). GNA12-dependent Rho signaling also regulates protein phosphatese 2A activation causing dephosphorylation of its target proteins. Promotes tumor cell invasion and metastasis by activating RhoA/ROCK signaling pathway and up-regulating pro-inflammatory cytokine production. Inhibits CDH1-mediated cell adhesion in process independent from Rho activation. Together with NAPA promotes CDH5 localization to plasma membrane. May play a role in the control of cell migration through the TOR signaling cascade. This chain is Guanine nucleotide-binding protein subunit alpha-12 (Gna12), found in Rattus norvegicus (Rat).